Here is a 751-residue protein sequence, read N- to C-terminus: Dual specificity tyrosine-phosphorylation-regulated kinase 1A (751 aa).

Positions 59–68 (YNDQIQQPLP) are enriched in polar residues. Disordered regions lie at residues 59 to 81 (YNDQ…RDPA) and 104 to 129 (YAKK…KVYN). The Bipartite nuclear localization signal signature appears at 109–126 (RRHQQGQGDDSSHKKERK). A Protein kinase domain is found at 151-471 (YEIDSLIGKG…PYYALQHSFF (321 aa)). Residues 157 to 165 (IGKGSFGQV), lysine 180, and 230 to 233 (FEML) contribute to the ATP site. Aspartate 279 acts as the Proton acceptor in catalysis. The segment covering 477–493 (EGTNTSNSVSTSPAMEQ) has biased composition (polar residues). Disordered stretches follow at residues 477-532 (EGTN…HSGG), 580-667 (HVPS…GNQA), and 730-751 (GMDR…VASS). Low complexity predominate over residues 494–517 (SQSSGTTSSTSSSSGGSSGTSNSG). The histidine-rich domain (HRD) stretch occupies residues 585 to 613 (QQNVPHHHGNGSHHHHHHHHHHHGQHVLS). Residues 589–609 (PHHHGNGSHHHHHHHHHHHGQ) are compositionally biased toward basic residues. The segment covering 611-622 (VLSNRTRTRIYN) has biased composition (polar residues). 2 stretches are compositionally biased toward low complexity: residues 623–633 (SPSTSSSTQDS) and 642–660 (SMTS…SSST). Residues 742–751 (CVQQSPVASS) are compositionally biased toward polar residues.

This sequence belongs to the protein kinase superfamily. CMGC Ser/Thr protein kinase family. MNB/DYRK subfamily. Post-translationally, autophosphorylated on tyrosine residues.

The protein resides in the nucleus. It is found in the nucleus speckle. The enzyme catalyses L-seryl-[protein] + ATP = O-phospho-L-seryl-[protein] + ADP + H(+). It carries out the reaction L-threonyl-[protein] + ATP = O-phospho-L-threonyl-[protein] + ADP + H(+). It catalyses the reaction L-tyrosyl-[protein] + ATP = O-phospho-L-tyrosyl-[protein] + ADP + H(+). The catalysed reaction is [DNA-directed RNA polymerase] + ATP = phospho-[DNA-directed RNA polymerase] + ADP + H(+). In terms of biological role, dual-specificity kinase which possesses both serine/threonine and tyrosine kinase activities. Exhibits a substrate preference for proline at position P+1 and arginine at position P-3. Plays an important role in double-strand breaks (DSBs) repair following DNA damage. Mechanistically, phosphorylates RNF169 and increases its ability to block accumulation of TP53BP1 at the DSB sites thereby promoting homologous recombination repair (HRR). Also acts as a positive regulator of transcription by acting as a CTD kinase that mediates phosphorylation of the CTD (C-terminal domain) of the large subunit of RNA polymerase II (RNAP II) POLR2A. Modulates alternative splicing by phosphorylating the splice factor SRSF6. Phosphorylates SEPTIN4, SEPTIN5 and SF3B1. The polypeptide is Dual specificity tyrosine-phosphorylation-regulated kinase 1A (Xenopus tropicalis (Western clawed frog)).